The sequence spans 414 residues: ORC1-type DNA replication protein 11 (414 aa).

Residues valine 60–alanine 64, tyrosine 207, and arginine 219 each bind ATP.

This sequence belongs to the CDC6/cdc18 family.

Functionally, involved in regulation of DNA replication. The protein is ORC1-type DNA replication protein 11 (cdc6k) of Haloarcula marismortui (strain ATCC 43049 / DSM 3752 / JCM 8966 / VKM B-1809) (Halobacterium marismortui).